The sequence spans 311 residues: Linearmycin resistance ATP-binding protein LnrL (311 aa).

One can recognise an ABC transporter domain in the interval 2–232 (LQAENIKKAY…LGGDTIIQLT (231 aa)). An ATP-binding site is contributed by 34–41 (GPNGAGKS).

Belongs to the ABC transporter superfamily. As to quaternary structure, the complex is composed of two ATP-binding proteins (LnrL) and two transmembrane proteins (LnrM and LnrN).

Required for resistance to linearmycins, a family of antibiotic-specialized metabolites produced by some streptomycetes. Part of the ABC transporter complex LnrLMN that probably facilitates linearmycin removal from the membrane. Responsible for energy coupling to the transport system. Also mediates KinC-dependent biofilm morphology. The polypeptide is Linearmycin resistance ATP-binding protein LnrL (Bacillus subtilis (strain 168)).